Consider the following 1303-residue polypeptide: Zinc finger CCCH domain-containing protein 4 (1303 aa).

The segment covering Met-1 to Ser-33 has biased composition (pro residues). The disordered stretch occupies residues Met-1–Ser-388. The segment covering Asp-53–Gln-73 has biased composition (acidic residues). Thr-72 and Thr-75 each carry phosphothreonine. Ser-76, Ser-92, and Ser-94 each carry phosphoserine. Residues Glu-80–Ser-99 show a composition bias toward basic and acidic residues. Residues Asp-95–Arg-128 adopt a coiled-coil conformation. The span at His-100–Ala-130 shows a compositional bias: basic residues. A compositionally biased stretch (acidic residues) spans Asp-135–Asp-144. Tyr-155 bears the Phosphotyrosine mark. The segment covering Glu-194–Asp-218 has biased composition (acidic residues). Residues Asp-219–Ser-235 show a composition bias toward basic and acidic residues. The span at Arg-238–Gly-251 shows a compositional bias: basic residues. Residues Ser-252–Gly-274 show a composition bias toward gly residues. The span at Pro-278–Asp-304 shows a compositional bias: acidic residues. Positions Glu-305–Gly-321 are enriched in basic and acidic residues. Basic residues predominate over residues Gly-323–Gly-346. The segment covering Asn-358 to Gly-369 has biased composition (acidic residues). A compositionally biased stretch (basic and acidic residues) spans Arg-377 to Ser-388. C3H1-type zinc fingers lie at residues Lys-390–Glu-417, Pro-419–Phe-446, and Pro-447–Leu-470. Positions Ala-486–Val-496 are enriched in acidic residues. Positions Ala-486 to Gln-571 are disordered. Composition is skewed to pro residues over residues Leu-507–Pro-529 and Gly-539–Pro-558. Position 601 is an asymmetric dimethylarginine (Arg-601). The span at Pro-605 to Met-624 shows a compositional bias: pro residues. Disordered stretches follow at residues Pro-605–Met-685, Gly-710–Gln-955, and Pro-996–Lys-1288. The span at Pro-630 to Ala-650 shows a compositional bias: basic and acidic residues. Residues Asn-659–Pro-673 show a composition bias toward pro residues. Basic and acidic residues-rich tracts occupy residues Asp-717 to Glu-739 and Glu-782 to Arg-795. A coiled-coil region spans residues Arg-767–Gly-800. 2 positions are modified to phosphoserine: Ser-807 and Ser-808. A compositionally biased stretch (polar residues) spans Ser-815–Gly-843. The segment covering Ala-860–Glu-875 has biased composition (basic and acidic residues). Residues Ser-904, Ser-907, and Ser-908 each carry the phosphoserine modification. Positions Ser-904–Ser-918 are enriched in low complexity. Composition is skewed to polar residues over residues Gly-1028–Ala-1038 and Val-1053–Pro-1062. Over residues Lys-1067–Lys-1084 the composition is skewed to basic and acidic residues. Residues Pro-1097–Ser-1110 are compositionally biased toward low complexity. Ser-1104 carries the post-translational modification Phosphoserine. A Phosphothreonine modification is found at Thr-1106. 3 positions are modified to phosphoserine: Ser-1108, Ser-1110, and Ser-1114. At Thr-1118 the chain carries Phosphothreonine. The span at Gly-1129–Gln-1139 shows a compositional bias: gly residues. Low complexity predominate over residues Lys-1224–Ala-1234. The span at Thr-1235–Pro-1245 shows a compositional bias: pro residues. The span at Val-1259–Gly-1268 shows a compositional bias: polar residues. Phosphoserine is present on residues Ser-1269 and Ser-1275.

Belongs to the suppressor of sable family. In terms of assembly, interacts with WDR82.

The protein resides in the chromosome. Functionally, RNA-binding protein that suppresses transcription of long non-coding RNAs (lncRNAs). LncRNAs are defined as transcripts more than 200 nucleotides that are not translated into protein. Together with WDR82, part of a transcription termination checkpoint that promotes transcription termination of lncRNAs and their subsequent degradation by the exosome. The transcription termination checkpoint is activated by the inefficiently spliced first exon of lncRNAs. The protein is Zinc finger CCCH domain-containing protein 4 of Homo sapiens (Human).